The sequence spans 199 residues: uncharacterized protein (199 aa).

The stretch at 71-104 (RANATNKLTVIAEQIQHLQEQARKVLEDARRDAD) forms a coiled coil.

This is an uncharacterized protein from Mus musculus (Mouse).